The chain runs to 271 residues: ATP synthase subunit a (271 aa).

Transmembrane regions (helical) follow at residues 38–58, 100–120, 146–166, 220–240, and 242–262; these read FWTLNIDSMFFSVVLGLLFLV, LIAPLALTIFVWVFLMNLMDL, DVNITLSMALGVFILILFYSI, LIFILIAGLLPWWSQWILNVP, and AIFHILIITLQAFIFMVLTIV.

This sequence belongs to the ATPase A chain family. In terms of assembly, F-type ATPases have 2 components, CF(1) - the catalytic core - and CF(0) - the membrane proton channel. CF(1) has five subunits: alpha(3), beta(3), gamma(1), delta(1), epsilon(1). CF(0) has three main subunits: a(1), b(2) and c(9-12). The alpha and beta chains form an alternating ring which encloses part of the gamma chain. CF(1) is attached to CF(0) by a central stalk formed by the gamma and epsilon chains, while a peripheral stalk is formed by the delta and b chains.

The protein localises to the cell inner membrane. In terms of biological role, key component of the proton channel; it plays a direct role in the translocation of protons across the membrane. The chain is ATP synthase subunit a from Salmonella arizonae (strain ATCC BAA-731 / CDC346-86 / RSK2980).